Consider the following 227-residue polypeptide: Ribosomal RNA small subunit methyltransferase G (227 aa).

S-adenosyl-L-methionine contacts are provided by residues Gly-74, Leu-79, 124–125 (AE), and Arg-142.

Belongs to the methyltransferase superfamily. RNA methyltransferase RsmG family.

The protein localises to the cytoplasm. Functionally, specifically methylates the N7 position of guanine in position 518 of 16S rRNA. In Mycolicibacterium gilvum (strain PYR-GCK) (Mycobacterium gilvum (strain PYR-GCK)), this protein is Ribosomal RNA small subunit methyltransferase G.